A 273-amino-acid polypeptide reads, in one-letter code: Testis-specific serine/threonine-protein kinase 6 (273 aa).

In terms of domain architecture, Protein kinase spans 12–267 (YKLGRTIGEG…AGQVARNCWL (256 aa)). Residues 18 to 26 (IGEGSYSKV) and K41 contribute to the ATP site. The Proton acceptor role is filled by D135.

Belongs to the protein kinase superfamily. CAMK Ser/Thr protein kinase family. As to quaternary structure, microtubule inner protein component of sperm flagellar doublet microtubules. Interacts with HSP90; this interaction stabilizes and activates TSSK6. Interacts with the heat shock proteins HSPCB, HSPA8 and HSPA1A. These interactions appear to be required for TSSK6 kinase activity. Interacts with TSACC; this interaction is direct and recruits TSACC to HSP90, which is essential for kinase activity. It depends on Mg(2+) as a cofactor. Autophosphorylated. Post-translationally, ubiquitinated; HSP90 activity negatively regulates ubiquitination and degradation. Highly expressed in testis. Expressed at lower levels in colon, small intestine, ovary, prostate, thymus, spleen and peripheral blood leukocytes.

Its subcellular location is the cytoplasm. The protein resides in the cytoskeleton. It localises to the flagellum axoneme. It is found in the nucleus. It catalyses the reaction L-seryl-[protein] + ATP = O-phospho-L-seryl-[protein] + ADP + H(+). It carries out the reaction L-threonyl-[protein] + ATP = O-phospho-L-threonyl-[protein] + ADP + H(+). Its function is as follows. Serine/threonine-protein kinase component of the sperm flagellar doublet microtubules. May act as a regulator of sperm motility by mediating phosphorylation of sperm doublet microtubule proteins. Plays a role in DNA condensation during postmeiotic chromatin remodeling and histone-to-protamine transition during spermatogenesis. This is Testis-specific serine/threonine-protein kinase 6 from Homo sapiens (Human).